Consider the following 337-residue polypeptide: ATP-dependent 6-phosphofructokinase (337 aa).

Glycine 11 provides a ligand contact to ATP. Position 21–25 (21–25 (RAVVR)) interacts with ADP. ATP contacts are provided by residues 72–73 (RY) and 102–105 (GDGS). Position 103 (aspartate 103) interacts with Mg(2+). Position 125 to 127 (125 to 127 (TID)) interacts with substrate. Aspartate 127 acts as the Proton acceptor in catalysis. Residue arginine 154 coordinates ADP. Substrate-binding positions include arginine 162 and 169–171 (MGR). Residues 185-187 (GAD), lysine 212, and 214-216 (KNH) contribute to the ADP site. Residues glutamate 223, arginine 245, and 251–254 (HILR) each bind substrate.

This sequence belongs to the phosphofructokinase type A (PFKA) family. ATP-dependent PFK group I subfamily. Prokaryotic clade 'B1' sub-subfamily. Homotetramer. Requires Mg(2+) as cofactor.

Its subcellular location is the cytoplasm. It catalyses the reaction beta-D-fructose 6-phosphate + ATP = beta-D-fructose 1,6-bisphosphate + ADP + H(+). The protein operates within carbohydrate degradation; glycolysis; D-glyceraldehyde 3-phosphate and glycerone phosphate from D-glucose: step 3/4. With respect to regulation, allosterically activated by ADP and other diphosphonucleosides, and allosterically inhibited by phosphoenolpyruvate. In terms of biological role, catalyzes the phosphorylation of D-fructose 6-phosphate to fructose 1,6-bisphosphate by ATP, the first committing step of glycolysis. The chain is ATP-dependent 6-phosphofructokinase from Streptococcus pyogenes serotype M28 (strain MGAS6180).